We begin with the raw amino-acid sequence, 129 residues long: Dynein 14 kDa light chain, flagellar outer arm (129 aa).

The region spanning 2 to 109 is the Thioredoxin domain; it reads AFITEIANEA…LNRIVTELSG (108 aa). Cysteine 34 and cysteine 37 form a disulfide bridge. The interval 107-129 is disordered; it reads LSGKNPPPAAPAAAPAAPAAEAS. The span at 117 to 129 shows a compositional bias: low complexity; sequence PAAAPAAPAAEAS.

In terms of assembly, consists of at least 3 heavy chains (alpha, beta and gamma), 2 intermediate chains and 8 light chains.

The protein resides in the cell projection. It is found in the cilium. It localises to the flagellum. The protein localises to the cytoplasm. Its subcellular location is the cytoskeleton. The protein resides in the flagellum axoneme. In terms of biological role, may be involved in regulating the redox state of functionally important thiol groups within dynein. This chain is Dynein 14 kDa light chain, flagellar outer arm, found in Chlamydomonas reinhardtii (Chlamydomonas smithii).